The chain runs to 416 residues: MSYLEKQDPEVYAALKKEDERQEHSLEMIASENFVSRPVLEAYHSTLTNKYAEGYPGKRYYNGCENADRVEELAIERAKKMFGAEYANVQPHSGAQANMAVFLATLEPGDSFLGMNLAHGGHLTHGSAVNISGKYFKPIPYGVDEKTETINYDEVAKLAKEHKPKLIVVGASAYPRVIDFNKFREIADGIGAKIMADIAHISGLVVAGEHPSPIGVCDFVTTTTHKTLRGPRGGLILSSSEHEKILNSRVFPGIQGGPLMHVIAAKAVAFGEALQPDFKTYIKQVVKNAKTLAEVFQKRGFRVVSGGTDNHIVLLDVSVKGLTGKDAADGLDHIGVTVNKNAIPFDKNPPAVASGIRLGTPALTTRGLKEKEIEAVGNLICDYLEHFGDTSFESKVKAAVKEITGAFPMNHFRLED.

Residues Leu117 and 121-123 (GHL) each bind (6S)-5,6,7,8-tetrahydrofolate. N6-(pyridoxal phosphate)lysine is present on Lys226.

Belongs to the SHMT family. Homodimer. Pyridoxal 5'-phosphate is required as a cofactor.

It localises to the cytoplasm. The catalysed reaction is (6R)-5,10-methylene-5,6,7,8-tetrahydrofolate + glycine + H2O = (6S)-5,6,7,8-tetrahydrofolate + L-serine. It functions in the pathway one-carbon metabolism; tetrahydrofolate interconversion. The protein operates within amino-acid biosynthesis; glycine biosynthesis; glycine from L-serine: step 1/1. Functionally, catalyzes the reversible interconversion of serine and glycine with tetrahydrofolate (THF) serving as the one-carbon carrier. This reaction serves as the major source of one-carbon groups required for the biosynthesis of purines, thymidylate, methionine, and other important biomolecules. Also exhibits THF-independent aldolase activity toward beta-hydroxyamino acids, producing glycine and aldehydes, via a retro-aldol mechanism. This chain is Serine hydroxymethyltransferase, found in Leptospira biflexa serovar Patoc (strain Patoc 1 / Ames).